A 403-amino-acid chain; its full sequence is Heparan-sulfate 6-O-sulfotransferase 2 (403 aa).

Residues Met-1 to Lys-7 are Cytoplasmic-facing. The helical; Signal-anchor for type II membrane protein transmembrane segment at Val-8–Pro-28 threads the bilayer. Residues Gly-29–Arg-403 are Lumenal-facing. An N-linked (GlcNAc...) asparagine glycan is attached at Asn-64. Residue His-88–Thr-96 participates in 3'-phosphoadenylyl sulfate binding. Residues Lys-118–Lys-119, Arg-135, Trp-140, and His-145 contribute to the substrate site. The active-site Proton acceptor is His-145. 3'-phosphoadenylyl sulfate is bound by residues Arg-180 and Ser-188. Substrate-binding residues include His-192 and Trp-199. The N-linked (GlcNAc...) asparagine glycan is linked to Asn-259. Thr-312–Tyr-314 lines the 3'-phosphoadenylyl sulfate pocket. Asn-315 is a glycosylation site (N-linked (GlcNAc...) asparagine). A 3'-phosphoadenylyl sulfate-binding site is contributed by Arg-318–Ala-319. The interval Ala-381–Arg-403 is disordered. Asn-389 carries an N-linked (GlcNAc...) asparagine glycan.

The protein belongs to the sulfotransferase 6 family.

The protein localises to the membrane. The catalysed reaction is alpha-D-glucosaminyl-[heparan sulfate](n) + 3'-phosphoadenylyl sulfate = 6-sulfo-alpha-D-glucosaminyl-[heparan sulfate](n) + adenosine 3',5'-bisphosphate + H(+). Functionally, 6-O-sulfation enzyme which catalyzes the transfer of sulfate from 3'-phosphoadenosine 5'-phosphosulfate (PAPS) to position 6 of the N-sulfoglucosamine residue (GlcNS) of heparan sulfate. May also play a role in limb development. The chain is Heparan-sulfate 6-O-sulfotransferase 2 (HS6ST2) from Gallus gallus (Chicken).